The sequence spans 747 residues: MQAAKPLFDYPKYWAECFGPAPFLPMSREEMDQLGWDSCDIIIVTGDAYVDHPSFGMAIIGRLLEAQGFRVGIIAQPDWQSKDDFMKLGEPNLFFGVAAGNMDSMINRYTADKKVRSDDAYTPGGLAGKRPDRASLVYSQRCKEAYSHVPVILGGIEASLRRIAHYDYWQDKVRRSILMDATADILLYGNAERAVVEIAQRLAQGELVSAITDVRGTAFVRRDTPEGWFEIDSTRIDRPGKIDKIINPYVNTQDTAACAIEQEKGAQEDPQEAKVVQLLANPRLTREKTVIRLPSFEKVRNDPVLYAHANRVLHLETNPGNARALVQKHGEVDVWFNPPPIPMSTEEMDYVFGMPYARVPHPAYGKAKIPAYEMIRFSVNIMRGCFGGCTFCSITEHEGRIIQNRSHDSIIREIEEMRDKVPGFTGVVSDLGGPTANMYRIACKSPDIERHCRKPSCVFPGICENLDTDHSSLIELYRKARALPGVKKILIASGLRYDLAVESPEYVKELVTHHVGGYLKIAPEHTERGPLDKMMKPGIGTYDRFKQMFEKFSKEAGKEQYLIPYFIAAHPGTTDEDMMNLALWLKRNGFRADQVQAFYPSPMATATAMYHSGKNPLRKVTYKSDGVTIVKSDQQRRLHKAFLRYHDPKGWPLLREALERMGRADLIGNGKHHLVPTYQPDTGEYQSARRKNSTPAGSKKAGKLLTQHTGLPPRASDGGKPWSKGQQNKATAFAKGKKKSRQPNIPR.

Residues 371-640 (AYEMIRFSVN…KSDQQRRLHK (270 aa)) form the Radical SAM core domain. The [4Fe-4S] cluster site is built by C385, C389, and C392. A disordered region spans residues 670 to 747 (GKHHLVPTYQ…KKSRQPNIPR (78 aa)).

This sequence belongs to the UPF0313 family. [4Fe-4S] cluster serves as cofactor.

The sequence is that of UPF0313 protein PA4928 from Pseudomonas aeruginosa (strain ATCC 15692 / DSM 22644 / CIP 104116 / JCM 14847 / LMG 12228 / 1C / PRS 101 / PAO1).